The primary structure comprises 205 residues: Transcriptional regulatory protein PdtaR (205 aa).

The Response regulatory domain maps to 15 to 129; the sequence is RVLIAEDEAL…DLIPAIELAV (115 aa). The residue at position 65 (aspartate 65) is a 4-aspartylphosphate. Residues 135-196 enclose the ANTAR domain; it reads ITALEGEVAT…TMKRVAEVVL (62 aa).

Post-translationally, phosphorylated and activated by PdtaS.

It is found in the cytoplasm. In terms of biological role, member of the two-component regulatory system PdtaR/PdtaS. This two-component system plays an essential role in mycobacterial adaptation to poor nutrient conditions. PdtaR probably acts at the level of transcriptional antitermination rather than transcriptional initiation. Functionally, in addition, the PdtaR/PdtaS two-component system controls copper and nitric oxide (NO) resistance downstream of the intramembrane protease Rip1. This coupled Rip1/PdtaS/PdtaR circuit controls NO resistance and acute lung infection in mice by relieving PdtaR/PdtaS-mediated repression of isonitrile chalkophore biosynthesis. Two signals are required to fully inactivate the PdtaR/PdtaS system and mediate NO resistance: a cytoplasmic inhibitory signal through the PdtaS kinase mediated by direct sensing of NO and the production of PPE1-5', an NO-induced small RNA, to sequester PdtaR. This Mycobacterium tuberculosis (strain CDC 1551 / Oshkosh) protein is Transcriptional regulatory protein PdtaR (pdtaR).